The following is a 161-amino-acid chain: Nucleotide-binding protein Shew185_3601 (161 aa).

Belongs to the YajQ family.

In terms of biological role, nucleotide-binding protein. The polypeptide is Nucleotide-binding protein Shew185_3601 (Shewanella baltica (strain OS185)).